The sequence spans 233 residues: Small ribosomal subunit protein uS2 (233 aa).

This sequence belongs to the universal ribosomal protein uS2 family.

The sequence is that of Small ribosomal subunit protein uS2 from Bacillus cytotoxicus (strain DSM 22905 / CIP 110041 / 391-98 / NVH 391-98).